The primary structure comprises 128 residues: Large ribosomal subunit protein uL22 (128 aa).

The protein belongs to the universal ribosomal protein uL22 family. In terms of assembly, part of the 50S ribosomal subunit.

In terms of biological role, this protein binds specifically to 23S rRNA; its binding is stimulated by other ribosomal proteins, e.g. L4, L17, and L20. It is important during the early stages of 50S assembly. It makes multiple contacts with different domains of the 23S rRNA in the assembled 50S subunit and ribosome. Its function is as follows. The globular domain of the protein is located near the polypeptide exit tunnel on the outside of the subunit, while an extended beta-hairpin is found that lines the wall of the exit tunnel in the center of the 70S ribosome. The protein is Large ribosomal subunit protein uL22 of Prochlorococcus marinus (strain MIT 9312).